The chain runs to 104 residues: Pyrimidine/purine nucleoside phosphorylase (104 aa).

Belongs to the nucleoside phosphorylase PpnP family.

The catalysed reaction is a purine D-ribonucleoside + phosphate = a purine nucleobase + alpha-D-ribose 1-phosphate. It carries out the reaction adenosine + phosphate = alpha-D-ribose 1-phosphate + adenine. The enzyme catalyses cytidine + phosphate = cytosine + alpha-D-ribose 1-phosphate. It catalyses the reaction guanosine + phosphate = alpha-D-ribose 1-phosphate + guanine. The catalysed reaction is inosine + phosphate = alpha-D-ribose 1-phosphate + hypoxanthine. It carries out the reaction thymidine + phosphate = 2-deoxy-alpha-D-ribose 1-phosphate + thymine. The enzyme catalyses uridine + phosphate = alpha-D-ribose 1-phosphate + uracil. It catalyses the reaction xanthosine + phosphate = alpha-D-ribose 1-phosphate + xanthine. Functionally, catalyzes the phosphorolysis of diverse nucleosides, yielding D-ribose 1-phosphate and the respective free bases. Can use uridine, adenosine, guanosine, cytidine, thymidine, inosine and xanthosine as substrates. Also catalyzes the reverse reactions. The protein is Pyrimidine/purine nucleoside phosphorylase of Janthinobacterium sp. (strain Marseille) (Minibacterium massiliensis).